A 110-amino-acid chain; its full sequence is Ribonuclease P protein component 4 (110 aa).

Cys-65, Cys-68, Cys-94, and Cys-97 together coordinate Zn(2+).

This sequence belongs to the eukaryotic/archaeal RNase P protein component 4 family. As to quaternary structure, consists of a catalytic RNA component and at least 4-5 protein subunits. Requires Zn(2+) as cofactor.

Its subcellular location is the cytoplasm. The enzyme catalyses Endonucleolytic cleavage of RNA, removing 5'-extranucleotides from tRNA precursor.. Part of ribonuclease P, a protein complex that generates mature tRNA molecules by cleaving their 5'-ends. This is Ribonuclease P protein component 4 from Methanococcus maripaludis (strain C7 / ATCC BAA-1331).